Consider the following 149-residue polypeptide: FAD synthase (149 aa).

ATP is bound by residues 10-11 (TF), 15-18 (HPGH), D95, and Y123.

This sequence belongs to the archaeal FAD synthase family. In terms of assembly, homodimer. Co(2+) is required as a cofactor.

The catalysed reaction is FMN + ATP + H(+) = FAD + diphosphate. The protein operates within cofactor biosynthesis; FAD biosynthesis; FAD from FMN: step 1/1. With respect to regulation, is inhibited by the product PPi. Catalyzes the transfer of the AMP portion of ATP to flavin mononucleotide (FMN) to produce flavin adenine dinucleotide (FAD) coenzyme. To a lesser extent, is also able to utilize other nucleotides such as CTP and GTP as substrates, producing the modified coenzymes, flavin cytosine dinucleotide (FCD) and flavin guanine dinucleotide (FGD), respectively. Does not catalyze the reverse reaction to produce FMN and ATP from FAD and PPi. Does not function as a glycerol-3-phosphate cytidylyltransferase, as previously annotated in the complete genome. The polypeptide is FAD synthase (ribL) (Methanocaldococcus jannaschii (strain ATCC 43067 / DSM 2661 / JAL-1 / JCM 10045 / NBRC 100440) (Methanococcus jannaschii)).